Reading from the N-terminus, the 397-residue chain is CCA-adding enzyme (397 aa).

Positions 27 and 30 each coordinate ATP. The CTP site is built by glycine 27 and arginine 30. Mg(2+)-binding residues include aspartate 40 and aspartate 42. Residues arginine 111, aspartate 154, arginine 157, arginine 160, and arginine 163 each contribute to the ATP site. The CTP site is built by arginine 111, aspartate 154, arginine 157, arginine 160, and arginine 163.

Belongs to the tRNA nucleotidyltransferase/poly(A) polymerase family. Bacterial CCA-adding enzyme type 3 subfamily. As to quaternary structure, homodimer. It depends on Mg(2+) as a cofactor.

The enzyme catalyses a tRNA precursor + 2 CTP + ATP = a tRNA with a 3' CCA end + 3 diphosphate. The catalysed reaction is a tRNA with a 3' CCA end + 2 CTP + ATP = a tRNA with a 3' CCACCA end + 3 diphosphate. Its function is as follows. Catalyzes the addition and repair of the essential 3'-terminal CCA sequence in tRNAs without using a nucleic acid template. Adds these three nucleotides in the order of C, C, and A to the tRNA nucleotide-73, using CTP and ATP as substrates and producing inorganic pyrophosphate. tRNA 3'-terminal CCA addition is required both for tRNA processing and repair. Also involved in tRNA surveillance by mediating tandem CCA addition to generate a CCACCA at the 3' terminus of unstable tRNAs. While stable tRNAs receive only 3'-terminal CCA, unstable tRNAs are marked with CCACCA and rapidly degraded. In Bacillus licheniformis (strain ATCC 14580 / DSM 13 / JCM 2505 / CCUG 7422 / NBRC 12200 / NCIMB 9375 / NCTC 10341 / NRRL NRS-1264 / Gibson 46), this protein is CCA-adding enzyme.